A 67-amino-acid chain; its full sequence is Probable Sec-independent protein translocase protein TatE (67 aa).

Residues Ile4–Gly21 form a helical membrane-spanning segment.

Belongs to the TatA/E family. TatE subfamily.

It localises to the cell inner membrane. In terms of biological role, part of the twin-arginine translocation (Tat) system that transports large folded proteins containing a characteristic twin-arginine motif in their signal peptide across membranes. TatE shares overlapping functions with TatA. This Citrobacter rodentium (strain ICC168) (Citrobacter freundii biotype 4280) protein is Probable Sec-independent protein translocase protein TatE.